The following is a 405-amino-acid chain: 4-hydroxy-3-methylbut-2-enyl diphosphate reductase (405 aa).

Position 66 (Cys-66) interacts with [4Fe-4S] cluster. His-96 provides a ligand contact to (2E)-4-hydroxy-3-methylbut-2-enyl diphosphate. His-96 provides a ligand contact to dimethylallyl diphosphate. His-96 is a binding site for isopentenyl diphosphate. Cys-158 provides a ligand contact to [4Fe-4S] cluster. His-186 contacts (2E)-4-hydroxy-3-methylbut-2-enyl diphosphate. His-186 provides a ligand contact to dimethylallyl diphosphate. His-186 is an isopentenyl diphosphate binding site. Glu-188 acts as the Proton donor in catalysis. A (2E)-4-hydroxy-3-methylbut-2-enyl diphosphate-binding site is contributed by Thr-251. Cys-289 contacts [4Fe-4S] cluster. (2E)-4-hydroxy-3-methylbut-2-enyl diphosphate is bound by residues Ser-318, Ser-319, Asn-320, and Ser-380. Dimethylallyl diphosphate is bound by residues Ser-318, Ser-319, Asn-320, and Ser-380. Ser-318, Ser-319, Asn-320, and Ser-380 together coordinate isopentenyl diphosphate.

This sequence belongs to the IspH family. Requires [4Fe-4S] cluster as cofactor.

The catalysed reaction is isopentenyl diphosphate + 2 oxidized [2Fe-2S]-[ferredoxin] + H2O = (2E)-4-hydroxy-3-methylbut-2-enyl diphosphate + 2 reduced [2Fe-2S]-[ferredoxin] + 2 H(+). It catalyses the reaction dimethylallyl diphosphate + 2 oxidized [2Fe-2S]-[ferredoxin] + H2O = (2E)-4-hydroxy-3-methylbut-2-enyl diphosphate + 2 reduced [2Fe-2S]-[ferredoxin] + 2 H(+). It participates in isoprenoid biosynthesis; dimethylallyl diphosphate biosynthesis; dimethylallyl diphosphate from (2E)-4-hydroxy-3-methylbutenyl diphosphate: step 1/1. It functions in the pathway isoprenoid biosynthesis; isopentenyl diphosphate biosynthesis via DXP pathway; isopentenyl diphosphate from 1-deoxy-D-xylulose 5-phosphate: step 6/6. Functionally, catalyzes the conversion of 1-hydroxy-2-methyl-2-(E)-butenyl 4-diphosphate (HMBPP) into a mixture of isopentenyl diphosphate (IPP) and dimethylallyl diphosphate (DMAPP). Acts in the terminal step of the DOXP/MEP pathway for isoprenoid precursor biosynthesis. The chain is 4-hydroxy-3-methylbut-2-enyl diphosphate reductase from Cyanothece sp. (strain PCC 7425 / ATCC 29141).